Here is a 762-residue protein sequence, read N- to C-terminus: Cell surface protein (762 aa).

The signal sequence occupies residues 1-26; it reads MKNLKKLIAVVSTFALVFSAMAVGFA. 3 SLH domains span residues 27–90, 92–155, and 156–204; these read ATTP…EMAK, EKSA…WPYG, and YLAK…KEVL. Residues Tyr-297, Tyr-516, Tyr-520, and Tyr-632 are each glycosylated (O-linked (Glc...) tyrosine).

Glycosylated; contains 8% carbohydrates, which correspond to about 40 to 50 sugar molecules per monomer. O-linked glycans consist of Glc, GalNAc and GlcNAc.

The protein localises to the secreted. Its subcellular location is the cell wall. The protein resides in the S-layer. Its function is as follows. The S-layer is a paracrystalline mono-layered assembly of proteins which coat the surface of bacteria. This chain is Cell surface protein, found in Thermoanaerobacter kivui (Acetogenium kivui).